We begin with the raw amino-acid sequence, 235 residues long: Ribonuclease PH (235 aa).

Phosphate is bound by residues R86 and 124-126 (GTR).

This sequence belongs to the RNase PH family. As to quaternary structure, homohexameric ring arranged as a trimer of dimers.

It catalyses the reaction tRNA(n+1) + phosphate = tRNA(n) + a ribonucleoside 5'-diphosphate. Its function is as follows. Phosphorolytic 3'-5' exoribonuclease that plays an important role in tRNA 3'-end maturation. Removes nucleotide residues following the 3'-CCA terminus of tRNAs; can also add nucleotides to the ends of RNA molecules by using nucleoside diphosphates as substrates, but this may not be physiologically important. Probably plays a role in initiation of 16S rRNA degradation (leading to ribosome degradation) during starvation. This is Ribonuclease PH from Legionella pneumophila (strain Paris).